The primary structure comprises 600 residues: Threonine dehydratase, mitochondrial (600 aa).

Lysine 144 bears the N6-(pyridoxal phosphate)lysine mark. 2 ACT-like domains span residues 425–497 (VFLS…DISD) and 519–590 (RLYR…DETN).

This sequence belongs to the serine/threonine dehydratase family. As to quaternary structure, homotetramer. Requires pyridoxal 5'-phosphate as cofactor.

The protein localises to the mitochondrion. Its subcellular location is the cytoplasm. It carries out the reaction L-threonine = 2-oxobutanoate + NH4(+). The protein operates within amino-acid biosynthesis; L-isoleucine biosynthesis; 2-oxobutanoate from L-threonine: step 1/1. Isoleucine allosterically inhibits while valine allosterically activates this enzyme. In Schizosaccharomyces pombe (strain 972 / ATCC 24843) (Fission yeast), this protein is Threonine dehydratase, mitochondrial.